The primary structure comprises 529 residues: UPF0159 protein TC_0921 (529 aa).

ThyX domains follow at residues 38 to 274 (KGAL…AEPH) and 309 to 511 (KGVK…LKFV).

It belongs to the UPF0159 family.

The chain is UPF0159 protein TC_0921 from Chlamydia muridarum (strain MoPn / Nigg).